A 534-amino-acid polypeptide reads, in one-letter code: CTP synthase (534 aa).

The tract at residues 1 to 267 (MTKYIFVTGG…DQIVCDHLKL (267 aa)) is amidoligase domain. Position 13 (Ser-13) interacts with CTP. Ser-13 lines the UTP pocket. An ATP-binding site is contributed by 14–19 (SIGKGI). L-glutamine is bound at residue Tyr-54. ATP is bound at residue Asp-71. Mg(2+) is bound by residues Asp-71 and Glu-141. CTP-binding positions include 148–150 (DIE), 188–193 (KTKPTQ), and Lys-224. UTP contacts are provided by residues 188 to 193 (KTKPTQ) and Lys-224. The region spanning 292–534 (KIALVGKYVE…FVTAAVENMK (243 aa)) is the Glutamine amidotransferase type-1 domain. Residue Gly-354 coordinates L-glutamine. Cys-381 serves as the catalytic Nucleophile; for glutamine hydrolysis. L-glutamine-binding positions include 382 to 385 (LGMQ), Glu-405, and Arg-463. Catalysis depends on residues His-508 and Glu-510.

It belongs to the CTP synthase family. As to quaternary structure, homotetramer.

The catalysed reaction is UTP + L-glutamine + ATP + H2O = CTP + L-glutamate + ADP + phosphate + 2 H(+). It catalyses the reaction L-glutamine + H2O = L-glutamate + NH4(+). The enzyme catalyses UTP + NH4(+) + ATP = CTP + ADP + phosphate + 2 H(+). Its pathway is pyrimidine metabolism; CTP biosynthesis via de novo pathway; CTP from UDP: step 2/2. Its activity is regulated as follows. Allosterically activated by GTP, when glutamine is the substrate; GTP has no effect on the reaction when ammonia is the substrate. The allosteric effector GTP functions by stabilizing the protein conformation that binds the tetrahedral intermediate(s) formed during glutamine hydrolysis. Inhibited by the product CTP, via allosteric rather than competitive inhibition. In terms of biological role, catalyzes the ATP-dependent amination of UTP to CTP with either L-glutamine or ammonia as the source of nitrogen. Regulates intracellular CTP levels through interactions with the four ribonucleotide triphosphates. The sequence is that of CTP synthase from Streptococcus agalactiae serotype V (strain ATCC BAA-611 / 2603 V/R).